Here is a 166-residue protein sequence, read N- to C-terminus: Cofilin-1 (166 aa).

Ala-2 carries the post-translational modification N-acetylalanine. Phosphoserine occurs at positions 3 and 8. In terms of domain architecture, ADF-H spans 4-153; it reads GVAVSDGVIK…KDRCTLAEKL (150 aa). At Lys-13 the chain carries N6-acetyllysine. Phosphothreonine is present on Thr-25. A Nuclear localization signal motif is present at residues 30-34; that stretch reads KKRKK. Ser-41 is modified (phosphoserine). Tyr-68 carries the phosphotyrosine modification. Lys-73 carries the N6-acetyllysine modification. A Glycyl lysine isopeptide (Lys-Gly) (interchain with G-Cter in SUMO2) cross-link involves residue Lys-132. Tyr-140 is modified (phosphotyrosine). At Lys-144 the chain carries N6-acetyllysine. At Ser-156 the chain carries Phosphoserine.

This sequence belongs to the actin-binding proteins ADF family. In terms of assembly, can bind G- and F-actin in a 1:1 ratio of cofilin to actin. It is a major component of intranuclear and cytoplasmic actin rods. Interacts with the subcortical maternal complex (SCMC) via interaction with TLE6 and NLRP5. Interacts with C9orf72. Post-translationally, inactivated by phosphorylation on Ser-3. Phosphorylated on Ser-3 in resting cells. Dephosphorylated by PDXP/chronophin; this restores its activity in promoting actin filament depolymerization. The phosphorylation of Ser-24 may prevent recognition of the nuclear localization signal. Phosphorylated via a ARRB1-RAC1-LIMK1-PAK1 cascade upon active ligand stimulation of atypical chemokine receptor ACKR2.

It is found in the nucleus matrix. Its subcellular location is the cytoplasm. The protein localises to the cytoskeleton. The protein resides in the cell projection. It localises to the ruffle membrane. It is found in the lamellipodium membrane. Its subcellular location is the lamellipodium. The protein localises to the growth cone. The protein resides in the axon. In terms of biological role, binds to F-actin and exhibits pH-sensitive F-actin depolymerizing activity. Important for normal progress through mitosis and normal cytokinesis. In conjunction with the subcortical maternal complex (SCMC), plays an essential role for zygotes to progress beyond the first embryonic cell divisions via regulation of actin dynamics. Required for the centralization of the mitotic spindle and symmetric division of zygotes. Plays a role in the regulation of cell morphology and cytoskeletal organization in epithelial cells. Required for the up-regulation of atypical chemokine receptor ACKR2 from endosomal compartment to cell membrane, increasing its efficiency in chemokine uptake and degradation. Required for neural tube morphogenesis and neural crest cell migration. The sequence is that of Cofilin-1 (CFL1) from Bos taurus (Bovine).